Reading from the N-terminus, the 273-residue chain is Large ribosomal subunit protein uL2c (273 aa).

Positions 1–31 (MAIHLSKTSSPSTRNGAVNSQVKSNSRNRLI) are enriched in polar residues. Disordered stretches follow at residues 1 to 53 (MAIH…GHRG) and 222 to 273 (MNPV…RRSK).

It belongs to the universal ribosomal protein uL2 family. In terms of assembly, part of the 50S ribosomal subunit.

It is found in the plastid. It localises to the chloroplast. The protein is Large ribosomal subunit protein uL2c (rpl2) of Pisum sativum (Garden pea).